The primary structure comprises 428 residues: Cytochrome P450-terp (428 aa).

Position 377 (Cys-377) interacts with heme.

Belongs to the cytochrome P450 family. The cofactor is heme.

It localises to the cytoplasm. Functionally, catalyzes the hydroxylation of alpha-terpineol. This Pseudomonas sp protein is Cytochrome P450-terp (cyp108).